The chain runs to 278 residues: Diaminopimelate epimerase (278 aa).

Residues asparagine 13, glutamine 46, and asparagine 67 each contribute to the substrate site. Cysteine 76 functions as the Proton donor in the catalytic mechanism. Residues glycine 77 to asparagine 78, asparagine 160, asparagine 193, and glutamate 211 to arginine 212 each bind substrate. Cysteine 220 functions as the Proton acceptor in the catalytic mechanism. Residue glycine 221 to threonine 222 participates in substrate binding.

The protein belongs to the diaminopimelate epimerase family. As to quaternary structure, homodimer.

Its subcellular location is the cytoplasm. It carries out the reaction (2S,6S)-2,6-diaminopimelate = meso-2,6-diaminopimelate. The protein operates within amino-acid biosynthesis; L-lysine biosynthesis via DAP pathway; DL-2,6-diaminopimelate from LL-2,6-diaminopimelate: step 1/1. Its function is as follows. Catalyzes the stereoinversion of LL-2,6-diaminopimelate (L,L-DAP) to meso-diaminopimelate (meso-DAP), a precursor of L-lysine and an essential component of the bacterial peptidoglycan. The polypeptide is Diaminopimelate epimerase (Thioalkalivibrio sulfidiphilus (strain HL-EbGR7)).